The following is a 249-amino-acid chain: Pyridoxine 5'-phosphate synthase (249 aa).

Residue Asn7 participates in 3-amino-2-oxopropyl phosphate binding. 9 to 10 (DH) contributes to the 1-deoxy-D-xylulose 5-phosphate binding site. Arg18 is a 3-amino-2-oxopropyl phosphate binding site. Catalysis depends on His43, which acts as the Proton acceptor. 1-deoxy-D-xylulose 5-phosphate contacts are provided by Arg45 and His50. The Proton acceptor role is filled by Glu70. Thr100 contributes to the 1-deoxy-D-xylulose 5-phosphate binding site. The Proton donor role is filled by His198. 3-amino-2-oxopropyl phosphate-binding positions include Ala199 and 220 to 221 (GH).

This sequence belongs to the PNP synthase family. As to quaternary structure, homooctamer; tetramer of dimers.

It is found in the cytoplasm. The enzyme catalyses 3-amino-2-oxopropyl phosphate + 1-deoxy-D-xylulose 5-phosphate = pyridoxine 5'-phosphate + phosphate + 2 H2O + H(+). Its pathway is cofactor biosynthesis; pyridoxine 5'-phosphate biosynthesis; pyridoxine 5'-phosphate from D-erythrose 4-phosphate: step 5/5. Functionally, catalyzes the complicated ring closure reaction between the two acyclic compounds 1-deoxy-D-xylulose-5-phosphate (DXP) and 3-amino-2-oxopropyl phosphate (1-amino-acetone-3-phosphate or AAP) to form pyridoxine 5'-phosphate (PNP) and inorganic phosphate. In Azoarcus sp. (strain BH72), this protein is Pyridoxine 5'-phosphate synthase.